The chain runs to 204 residues: Probable nicotinate-nucleotide adenylyltransferase (204 aa).

It belongs to the NadD family.

It carries out the reaction nicotinate beta-D-ribonucleotide + ATP + H(+) = deamido-NAD(+) + diphosphate. It participates in cofactor biosynthesis; NAD(+) biosynthesis; deamido-NAD(+) from nicotinate D-ribonucleotide: step 1/1. In terms of biological role, catalyzes the reversible adenylation of nicotinate mononucleotide (NaMN) to nicotinic acid adenine dinucleotide (NaAD). The sequence is that of Probable nicotinate-nucleotide adenylyltransferase from Clostridium beijerinckii (strain ATCC 51743 / NCIMB 8052) (Clostridium acetobutylicum).